The primary structure comprises 1006 residues: Beta-galactosidase (1006 aa).

The N-terminal stretch at 1-19 is a signal peptide; that stretch reads MKLSSACAIALLAAQAAGA. A glycan (N-linked (GlcNAc...) asparagine) is linked at asparagine 156. Glutamate 200 serves as the catalytic Proton donor. Glutamate 298 acts as the Nucleophile in catalysis. N-linked (GlcNAc...) asparagine glycans are attached at residues asparagine 373, asparagine 402, asparagine 422, asparagine 478, asparagine 522, asparagine 622, asparagine 739, asparagine 760, asparagine 777, and asparagine 805.

Belongs to the glycosyl hydrolase 35 family.

The enzyme catalyses Hydrolysis of terminal non-reducing beta-D-galactose residues in beta-D-galactosides.. Functionally, cleaves beta-linked terminal galactosyl residues from gangliosides, glycoproteins, and glycosaminoglycans. This Aspergillus niger protein is Beta-galactosidase (lacA).